The primary structure comprises 422 residues: Serine hydroxymethyltransferase (422 aa).

(6S)-5,6,7,8-tetrahydrofolate-binding positions include leucine 119 and 123–125 (GHL). N6-(pyridoxal phosphate)lysine is present on lysine 228. (6S)-5,6,7,8-tetrahydrofolate is bound by residues glutamate 244 and 352–354 (SPF).

It belongs to the SHMT family. Homodimer. It depends on pyridoxal 5'-phosphate as a cofactor.

The protein resides in the cytoplasm. It catalyses the reaction (6R)-5,10-methylene-5,6,7,8-tetrahydrofolate + glycine + H2O = (6S)-5,6,7,8-tetrahydrofolate + L-serine. It participates in one-carbon metabolism; tetrahydrofolate interconversion. It functions in the pathway amino-acid biosynthesis; glycine biosynthesis; glycine from L-serine: step 1/1. Functionally, catalyzes the reversible interconversion of serine and glycine with tetrahydrofolate (THF) serving as the one-carbon carrier. This reaction serves as the major source of one-carbon groups required for the biosynthesis of purines, thymidylate, methionine, and other important biomolecules. Also exhibits THF-independent aldolase activity toward beta-hydroxyamino acids, producing glycine and aldehydes, via a retro-aldol mechanism. The protein is Serine hydroxymethyltransferase of Magnetococcus marinus (strain ATCC BAA-1437 / JCM 17883 / MC-1).